The following is a 113-amino-acid chain: Large ribosomal subunit protein bL19 (113 aa).

This sequence belongs to the bacterial ribosomal protein bL19 family.

This protein is located at the 30S-50S ribosomal subunit interface and may play a role in the structure and function of the aminoacyl-tRNA binding site. The chain is Large ribosomal subunit protein bL19 from Corynebacterium urealyticum (strain ATCC 43042 / DSM 7109).